An 89-amino-acid polypeptide reads, in one-letter code: Small ribosomal subunit protein uS17 (89 aa).

The protein belongs to the universal ribosomal protein uS17 family. In terms of assembly, part of the 30S ribosomal subunit.

One of the primary rRNA binding proteins, it binds specifically to the 5'-end of 16S ribosomal RNA. This is Small ribosomal subunit protein uS17 from Xanthomonas campestris pv. campestris (strain B100).